A 430-amino-acid chain; its full sequence is Adenylosuccinate synthetase (430 aa).

GTP contacts are provided by residues 12 to 18 (GDEGKGK) and 40 to 42 (GHT). Aspartate 13 acts as the Proton acceptor in catalysis. Mg(2+) is bound by residues aspartate 13 and glycine 40. IMP is bound by residues 13 to 16 (DEGK), 38 to 41 (NAGH), threonine 128, arginine 142, glutamine 223, threonine 238, and arginine 302. Catalysis depends on histidine 41, which acts as the Proton donor. Position 298-304 (298-304 (TTTGRPR)) interacts with substrate. GTP is bound by residues arginine 304, 330–332 (SID), and 412–414 (SVG).

The protein belongs to the adenylosuccinate synthetase family. Homodimer. Mg(2+) serves as cofactor.

It localises to the cytoplasm. The catalysed reaction is IMP + L-aspartate + GTP = N(6)-(1,2-dicarboxyethyl)-AMP + GDP + phosphate + 2 H(+). It functions in the pathway purine metabolism; AMP biosynthesis via de novo pathway; AMP from IMP: step 1/2. Functionally, plays an important role in the de novo pathway of purine nucleotide biosynthesis. Catalyzes the first committed step in the biosynthesis of AMP from IMP. This chain is Adenylosuccinate synthetase, found in Streptococcus sanguinis (strain SK36).